The following is a 356-amino-acid chain: MGANVLIMAGGTGGHVFPALACAREFQARGYAVHWLGTPRGIENDLVPSAGLPLHRIQIGGLRGKGLATLLKAPFQLIRSLFQARRIMNELRPVCVLGMGGFVTGPGGVAAKLTGAPLVIHEQNAVAGTSNRALAPLADRICEAFPDTFKPTGKRRTTGNPVRSELFLDSSRQIPDGRRLRLLVLGGSLGAEPLNKLLPAALALIPVEQRPELFHQAGRQHHESTADRYREAGVEAEVVPFIEDMARVYAWADLVVCRAGALTVSELAAAGLPALLVPLPHAIDDHQTRNADYLAREGAAFLLPQATTTAADLAARLSEVSMHPEQLEGMAARARRLAKPDATRTVVDICLEVARG.

UDP-N-acetyl-alpha-D-glucosamine is bound by residues 12–14, asparagine 124, arginine 163, serine 188, isoleucine 242, 261–266, and glutamine 287; these read TGG and ALTVSE.

The protein belongs to the glycosyltransferase 28 family. MurG subfamily.

It is found in the cell inner membrane. The catalysed reaction is di-trans,octa-cis-undecaprenyl diphospho-N-acetyl-alpha-D-muramoyl-L-alanyl-D-glutamyl-meso-2,6-diaminopimeloyl-D-alanyl-D-alanine + UDP-N-acetyl-alpha-D-glucosamine = di-trans,octa-cis-undecaprenyl diphospho-[N-acetyl-alpha-D-glucosaminyl-(1-&gt;4)]-N-acetyl-alpha-D-muramoyl-L-alanyl-D-glutamyl-meso-2,6-diaminopimeloyl-D-alanyl-D-alanine + UDP + H(+). It participates in cell wall biogenesis; peptidoglycan biosynthesis. In terms of biological role, cell wall formation. Catalyzes the transfer of a GlcNAc subunit on undecaprenyl-pyrophosphoryl-MurNAc-pentapeptide (lipid intermediate I) to form undecaprenyl-pyrophosphoryl-MurNAc-(pentapeptide)GlcNAc (lipid intermediate II). The chain is UDP-N-acetylglucosamine--N-acetylmuramyl-(pentapeptide) pyrophosphoryl-undecaprenol N-acetylglucosamine transferase from Azotobacter vinelandii (strain DJ / ATCC BAA-1303).